A 412-amino-acid chain; its full sequence is MQEFLQEAKNSSRIIANLGSAQKNRVLNEMADALIEHSSFILSHNQKDMNDAKLNNLNDALQDRLLLTEKRIQDMAIAIRQIASQQDPLGKILNGWVTKDGLNIQKVSIPIGVIGIIYESRPNVTSDTAALCFKSGNVCVLKGGKEAENSNKAIATILREVLRKNNLPEYAISLLPDSSREGVAKLIKQDKYVDLIVPRGGEALIRFVSENSSIPVIKHDKGICHIFIDQDANITKIFDIVVNAKCQKPSACNSIETLLIHTNIAALILSGLVETLSLHGTILKGCPETLQHINAIPATLEDFDTEYLANVLNIKIVANVDEAITHIQRHGSGHSESILSENYTTINKFLSEVDAACVYANASTRFTDGGEFGLGAEVGISTNKLHSRGPMGIEDLTTFKYKIYGQGQIRKG.

This sequence belongs to the gamma-glutamyl phosphate reductase family.

It is found in the cytoplasm. The catalysed reaction is L-glutamate 5-semialdehyde + phosphate + NADP(+) = L-glutamyl 5-phosphate + NADPH + H(+). Its pathway is amino-acid biosynthesis; L-proline biosynthesis; L-glutamate 5-semialdehyde from L-glutamate: step 2/2. Catalyzes the NADPH-dependent reduction of L-glutamate 5-phosphate into L-glutamate 5-semialdehyde and phosphate. The product spontaneously undergoes cyclization to form 1-pyrroline-5-carboxylate. In Aliarcobacter butzleri (strain RM4018) (Arcobacter butzleri), this protein is Gamma-glutamyl phosphate reductase.